Consider the following 376-residue polypeptide: Lipid-A-disaccharide synthase (376 aa).

The protein belongs to the LpxB family.

It carries out the reaction a lipid X + a UDP-2-N,3-O-bis[(3R)-3-hydroxyacyl]-alpha-D-glucosamine = a lipid A disaccharide + UDP + H(+). The protein operates within bacterial outer membrane biogenesis; LPS lipid A biosynthesis. In terms of biological role, condensation of UDP-2,3-diacylglucosamine and 2,3-diacylglucosamine-1-phosphate to form lipid A disaccharide, a precursor of lipid A, a phosphorylated glycolipid that anchors the lipopolysaccharide to the outer membrane of the cell. The sequence is that of Lipid-A-disaccharide synthase from Coxiella burnetii (strain Dugway 5J108-111).